The chain runs to 184 residues: Photosystem I assembly protein Ycf4 (184 aa).

The next 2 helical transmembrane spans lie at 22 to 42 and 57 to 77; these read FFWA…GTSS and IIFF…LFIS.

It belongs to the Ycf4 family.

It is found in the plastid. It localises to the chloroplast thylakoid membrane. Functionally, seems to be required for the assembly of the photosystem I complex. The sequence is that of Photosystem I assembly protein Ycf4 from Aethionema grandiflorum (Persian stone-cress).